The sequence spans 149 residues: Natriuretic peptides A (149 aa).

The first 23 residues, 1-23 (MGSPIAASFLLFLAVQLLGQTGA), serve as a signal peptide directing secretion. 2 consecutive propeptides follow at residues 24 to 121 (NPVY…AAPR) and 91 to 101 (DGGALGRSPWD). The disordered stretch occupies residues 49–103 (MPLEDEAESPQALSEQNAEAGAALSPLPEVPPWTGEVSPAQRDGGALGRSPWDSS). A Phosphoserine modification is found at S127. The cysteines at positions 128 and 144 are disulfide-linked. An important for degradation of atrial natriuretic peptide by IDE region spans residues 145 to 149 (NSFRY).

It belongs to the natriuretic peptide family. Homodimer; disulfide-linked antiparallel dimer. Post-translationally, the precursor molecule is proteolytically cleaved by CORIN at Arg-121 to produce the atrial natriuretic peptide. Undergoes further proteolytic cleavage by unknown proteases to give rise to long-acting natriuretic peptide, vessel dilator and kaliuretic peptide. Additional processing gives rise to the auriculin and atriopeptin peptides. In the kidneys, alternative processing by an unknown protease results in the peptide urodilatin. Cleavage by MME initiates degradation of the factor and thereby regulates its activity. Degradation by IDE results in reduced activation of NPR1 (in vitro). During IDE degradation, the resulting products can temporarily stimulate NPR2 to produce cGMP, before the fragments are completely degraded and inactivated by IDE (in vitro). In terms of processing, degraded by IDE. Post-translationally, phosphorylation on Ser-127 decreases vasorelaxant activity.

It is found in the secreted. It localises to the perikaryon. Its subcellular location is the cell projection. Hormone that plays a key role in mediating cardio-renal homeostasis, and is involved in vascular remodeling and regulating energy metabolism. Acts by specifically binding and stimulating NPR1 to produce cGMP, which in turn activates effector proteins, such as PRKG1, that drive various biological responses. Regulates vasodilation, natriuresis, diuresis and aldosterone synthesis and is therefore essential for regulating blood pressure, controlling the extracellular fluid volume and maintaining the fluid-electrolyte balance. Also involved in inhibiting cardiac remodeling and cardiac hypertrophy by inducing cardiomyocyte apoptosis and attenuating the growth of cardiomyocytes and fibroblasts. Plays a role in female pregnancy by promoting trophoblast invasion and spiral artery remodeling in uterus, and thus prevents pregnancy-induced hypertension. In adipose tissue, acts in various cGMP- and PKG-dependent pathways to regulate lipid metabolism and energy homeostasis. This includes up-regulating lipid metabolism and mitochondrial oxygen utilization by activating the AMP-activated protein kinase (AMPK), and increasing energy expenditure by acting via MAPK11 to promote the UCP1-dependent thermogenesis of brown adipose tissue. Binds the clearance receptor NPR3 which removes the hormone from circulation. Functionally, may have a role in cardio-renal homeostasis through regulation of natriuresis, diuresis, vasodilation, and inhibiting aldosterone synthesis. In vitro, promotes the production of cGMP and induces vasodilation. May promote natriuresis, at least in part, by enhancing prostaglandin E2 synthesis resulting in the inhibition of renal Na+-K+-ATPase. However reports on the involvement of this peptide in mammal blood volume and blood pressure homeostasis are conflicting; according to a report, in vivo it is not sufficient to activate cGMP and does not inhibit collecting duct transport nor effect diuresis and natriuresis. Appears to bind to specific receptors that are distinct from the receptors bound by atrial natriuretic peptide and vessel dilator. Possibly enhances protein excretion in urine by decreasing proximal tubular protein reabsorption. In terms of biological role, may have a role in cardio-renal homeostasis through regulation of natriuresis, diuresis, and vasodilation. In vitro, promotes the production of cGMP and induces vasodilation. May promote natriuresis, at least in part, by enhancing prostaglandin E2 synthesis resulting in the inhibition of renal Na+-K+-ATPase. However reports on the involvement of this peptide in mammal blood volume and blood pressure homeostasis are conflicting; according to a report it is not sufficient to activate cGMP and does not inhibit collecting duct transport nor effect diuresis and natriuresis. Appears to bind to specific receptors that are distinct from the receptors bound by the atrial natriuretic and long-acting natriuretic peptides. Possibly functions in protein excretion in urine by maintaining the integrity of the proximal tubules and enhancing protein excretion by decreasing proximal tubular protein reabsorption. Its function is as follows. May have a role in cardio-renal homeostasis through regulation of diuresis and inhibiting aldosterone synthesis. In vitro, promotes the production of cGMP and induces vasodilation. May promote natriuresis, at least in part, by enhancing prostaglandin E2 synthesis resulting in the inhibition of renal Na+-K+-ATPase. May have a role in potassium excretion but not sodium excretion (natriuresis). Possibly enhances protein excretion in urine by decreasing proximal tubular protein reabsorption. Hormone produced in the kidneys that appears to be important for maintaining cardio-renal homeostasis. Mediates vasodilation, natriuresis and diuresis primarily in the renal system, in order to maintain the extracellular fluid volume and control the fluid-electrolyte balance. Specifically binds and stimulates cGMP production by renal transmembrane receptors, likely NPR1. Urodilatin not ANP, may be the natriuretic peptide responsible for the regulation of sodium and water homeostasis in the kidney. Functionally, may have a role in cardio-renal homeostasis through regulation of natriuresis and vasodilation. In vivo promotes natriuresis and in vitro, vasodilates renal artery strips. In terms of biological role, may have a role in cardio-renal homeostasis through regulation of regulation of natriuresis and vasodilation. In vivo promotes natriuresis. In vitro, vasodilates intestinal smooth muscle but not smooth muscle strips. Its function is as follows. May have a role in cardio-renal homeostasis through regulation of natriuresis and vasodilation. In vivo promotes natriuresis. In vitro, selectively vasodilates intestinal and vascular smooth muscle strips. May have a role in cardio-renal homeostasis through regulation of natriuresis and vasodilation. In vivo promotes natriuresis. In vitro, selectively vasodilates intestinal smooth muscle but not vascular smooth muscle strips. This is Natriuretic peptides A (NPPA) from Canis lupus familiaris (Dog).